A 238-amino-acid chain; its full sequence is Probable 2-phosphosulfolactate phosphatase (238 aa).

The protein belongs to the ComB family. Requires Mg(2+) as cofactor.

The enzyme catalyses (2R)-O-phospho-3-sulfolactate + H2O = (2R)-3-sulfolactate + phosphate. This Clostridium beijerinckii (strain ATCC 51743 / NCIMB 8052) (Clostridium acetobutylicum) protein is Probable 2-phosphosulfolactate phosphatase.